Here is a 472-residue protein sequence, read N- to C-terminus: Meiotic spindle formation protein mei-1 (472 aa).

Residues 83 to 161 are disordered; it reads HEAMTRQSGS…TQGILPQNSA (79 aa). Ser92 is modified (phosphoserine; by mbk-2). 2 stretches are compositionally biased toward polar residues: residues 134–143 and 150–161; these read KSTSSMSTNP and NPTQGILPQNSA. ATP contacts are provided by residues 233 to 240 and 351 to 352; these read GPPGTGKT and RR.

This sequence belongs to the AAA ATPase family. Katanin p60 subunit A1 subfamily. As to quaternary structure, homohexamer; ATP hydrolysis initiates a cycle between an open spiral and a closed ring conformation which is probably involved in pulling tubulin dimers out from microtubules. Interacts with mei-2, which may serve as a targeting subunit. Interacts with mel-26, which targets mei-1 for ubiquitin mediated proteolysis. Interacts with phosphatase pph-4.1. In terms of processing, phosphorylated. Phosphorylation by mbk-2 is required for its rapid degradation following meiosis II. Likely dephosphorylated by the PP4 complex composed of catalytic subunit pph-4.1 and regulatory subunit ppfr-1. Post-translationally, polyubiquitination targets the protein for rapid degradation via the ubiquitin system at the end of meiosis. The BTB domain protein mel-26 may serve to specifically target mei-1 for ubiquitination by cul-3 containing complexes. The cul-3 protein is in turn regulated by neddylation by ned-8.

The protein resides in the cytoplasm. It localises to the cytoskeleton. Its subcellular location is the spindle pole. It is found in the chromosome. It carries out the reaction n ATP + n H2O + a microtubule = n ADP + n phosphate + (n+1) alpha/beta tubulin heterodimers.. ATPase activity is stimulated by microtubules, which promote homooligomerization. ATP-dependent microtubule severing is stimulated by interaction with mei-2. Its function is as follows. Catalytic subunit of a complex which severs microtubules in an ATP-dependent manner. Microtubule severing may promote rapid reorganization of cellular microtubule arrays. Required specifically for meiotic spindle formation in the female germline; the presence of this protein is inimical to the formation of mitotic spindles. In body wall muscles, regulates organization of myosin thick filaments. The chain is Meiotic spindle formation protein mei-1 from Caenorhabditis elegans.